The primary structure comprises 929 residues: Isoleucine--tRNA ligase (929 aa).

Residues P58–H68 carry the 'HIGH' region motif. E563 contacts L-isoleucyl-5'-AMP. The 'KMSKS' region motif lies at K605 to S609. K608 is an ATP binding site. Zn(2+) is bound by residues C892, C895, C912, and C915.

Belongs to the class-I aminoacyl-tRNA synthetase family. IleS type 1 subfamily. As to quaternary structure, monomer. Zn(2+) is required as a cofactor.

The protein localises to the cytoplasm. It carries out the reaction tRNA(Ile) + L-isoleucine + ATP = L-isoleucyl-tRNA(Ile) + AMP + diphosphate. Its function is as follows. Catalyzes the attachment of isoleucine to tRNA(Ile). As IleRS can inadvertently accommodate and process structurally similar amino acids such as valine, to avoid such errors it has two additional distinct tRNA(Ile)-dependent editing activities. One activity is designated as 'pretransfer' editing and involves the hydrolysis of activated Val-AMP. The other activity is designated 'posttransfer' editing and involves deacylation of mischarged Val-tRNA(Ile). In Neisseria meningitidis serogroup C / serotype 2a (strain ATCC 700532 / DSM 15464 / FAM18), this protein is Isoleucine--tRNA ligase.